A 1799-amino-acid polypeptide reads, in one-letter code: Putative neural-cadherin 2 (1799 aa).

N-linked (GlcNAc...) asparagine glycans are attached at residues Asn-13, Asn-64, Asn-86, Asn-118, Asn-195, Asn-260, Asn-264, Asn-283, and Asn-377. Cadherin domains are found at residues 37-136 (DRFL…PPVF), 137-252 (DRQT…APQF), 253-364 (PQGI…PPQF), 368-485 (EWVT…VPKF), 486-590 (DREH…APTF), 590-709 (FAQD…QPGS), and 708-812 (GSKS…AGSM). N-linked (GlcNAc...) asparagine glycosylation is found at Asn-601, Asn-793, Asn-910, Asn-948, and Asn-969. Positions 973-1010 (QDHNCRTHLCYNGGRCVETRNGPKCVACPVGYNGPRCQ) constitute an EGF-like 1 domain. Disulfide bonds link Cys-977–Cys-988, Cys-982–Cys-997, Cys-1000–Cys-1009, Cys-1191–Cys-1217, Cys-1224–Cys-1239, Cys-1233–Cys-1248, and Cys-1250–Cys-1259. The Laminin G-like 1 domain occupies 1011 to 1217 (QSTRSFRGNG…ALARNSFPAC (207 aa)). The region spanning 1220 to 1260 (TDEVCLKTEHTARCWEHGNCVASLVQAKCHCQPGWMGPGCN) is the EGF-like 2 domain. Positions 1263–1454 (TIPTTFKAQS…TMARNLERNC (192 aa)) constitute a Laminin G-like 2 domain. 2 N-linked (GlcNAc...) asparagine glycosylation sites follow: Asn-1376 and Asn-1437. 4 disulfide bridges follow: Cys-1419/Cys-1454, Cys-1501/Cys-1512, Cys-1506/Cys-1523, and Cys-1525/Cys-1534. In terms of domain architecture, EGF-like 3; calcium-binding spans 1497 to 1535 (DRNECLDLPCLNGATCINLEPRLRYRCICPEGYWGENCE). The helical transmembrane segment at 1549–1569 (ALGAIFVCLIIILILALIFVL) threads the bilayer. Residues 1726 to 1799 (ASSQLPSDGG…PLPEVDKVVL (74 aa)) form a disordered region. Composition is skewed to gly residues over residues 1733-1744 (DGGGGSGDGPGP), 1752-1763 (LGGGGTGGGSGI), and 1775-1786 (SGAGPGGGGGSS).

It is found in the cell membrane. In terms of biological role, cadherins are calcium-dependent cell adhesion proteins. They preferentially interact with themselves in a homophilic manner in connecting cells. In Drosophila melanogaster (Fruit fly), this protein is Putative neural-cadherin 2 (CadN2).